Reading from the N-terminus, the 121-residue chain is Darcynin homolog (121 aa).

This sequence belongs to the darcynin family.

The polypeptide is Darcynin homolog (Streptomyces avermitilis (strain ATCC 31267 / DSM 46492 / JCM 5070 / NBRC 14893 / NCIMB 12804 / NRRL 8165 / MA-4680)).